A 1004-amino-acid polypeptide reads, in one-letter code: Retrovirus-related Pol polyprotein from type-1 retrotransposable element R1 (1004 aa).

Residues 450-717 (QCLLESYFPQ…SEVKHLGIFV (268 aa)) enclose the Reverse transcriptase domain. The interval 853-1004 (LSGSQFKELL…RLMRGMRIRE (152 aa)) is nucleic acid-binding endonuclease.

The enzyme catalyses DNA(n) + a 2'-deoxyribonucleoside 5'-triphosphate = DNA(n+1) + diphosphate. The chain is Retrovirus-related Pol polyprotein from type-1 retrotransposable element R1 from Bradysia coprophila (Dark-winged fungus gnat).